The sequence spans 440 residues: MGLPGSPWQWVLLLLGLLLPPATSFWLLNVLFPPHTTPKAELSNHTRPVILVPGCMGNRLEAKLDKPNVVNWLCYRKTEDFFTIWLDFNMFLPLGVDCWIDNTRVVYNRSSGHMSNAPGVQIRVPGFGKTYSVEYLDDNKLAGYLHTLVQNLVNNGYVRDETVRAAPYDWRLAPRQQDEYYQKLAGLVEEMYAAYGKPVFLIGHSLGCLHVLHFLLRQPQSWKDHFIDGFISLGAPWGGSIKPMRILASGDNQGIPIMSNIKLREEQRITTTSPWMFPAHHVWPEDHVFISTPNFNYTGQDFERFFADLHFEEGWHMFLQSRDLLAGLPAPGVEVYCLYGVGMPTAHTYIYDHNFPYKDPVAALYEDGDDTVATRSTELCGQWQGRQSQAVHLLPMNGTDHLNMVFSNKTLEHINAILLGAYRHGTPKSPTASLGPPTKE.

An N-terminal signal peptide occupies residues 1-24; that stretch reads MGLPGSPWQWVLLLLGLLLPPATS. N-linked (GlcNAc...) asparagine glycosylation is present at Asn-44. A disulfide bridge connects residues Cys-74 and Cys-98. N-linked (GlcNAc...) asparagine glycosylation occurs at Asn-108. Ser-205 (nucleophile) is an active-site residue. Asn-296 carries N-linked (GlcNAc...) asparagine glycosylation. Cysteines 337 and 380 form a disulfide. Asp-369 (charge relay system) is an active-site residue. N-linked (GlcNAc...) asparagine glycosylation is present at Asn-397. Residue His-401 is the Charge relay system of the active site. An N-linked (GlcNAc...) asparagine glycan is attached at Asn-408.

This sequence belongs to the AB hydrolase superfamily. Lipase family. As to expression, detected in blood plasma (at protein level).

It localises to the secreted. It carries out the reaction a sterol + a 1,2-diacyl-sn-glycero-3-phosphocholine = a sterol ester + a 1-acyl-sn-glycero-3-phosphocholine. The catalysed reaction is a 1-O-alkyl-2-acetyl-sn-glycero-3-phosphocholine + H2O = a 1-O-alkyl-sn-glycero-3-phosphocholine + acetate + H(+). The enzyme catalyses 1-hexadecanoyl-2-(9Z,12Z-octadecadienoyl)-sn-glycero-3-phosphocholine + H2O = (9Z,12Z)-octadecadienoate + 1-hexadecanoyl-sn-glycero-3-phosphocholine + H(+). It catalyses the reaction 1-hexadecanoyl-2-(5Z,8Z,11Z,14Z-eicosatetraenoyl)-sn-glycero-3-phosphocholine + H2O = 1-hexadecanoyl-sn-glycero-3-phosphocholine + (5Z,8Z,11Z,14Z)-eicosatetraenoate + H(+). It carries out the reaction 1-hexadecanoyl-2-(5Z,8Z,11Z,14Z-eicosatetraenoyl)-sn-glycero-3-phosphocholine + cholesterol = cholesteryl (5Z,8Z,11Z,14Z)-eicosatetraenoate + 1-hexadecanoyl-sn-glycero-3-phosphocholine. The catalysed reaction is 1-hexadecanoyl-2-(9Z-octadecenoyl)-sn-glycero-3-phosphocholine + cholesterol = cholesteryl (9Z-octadecenoate) + 1-hexadecanoyl-sn-glycero-3-phosphocholine. The enzyme catalyses a 1-hexadecanoyl-2-acyl-sn-glycero-3-phosphocholine + (24S)-hydroxycholesterol = (24S)-24-hydroxycholesterol ester + 1-hexadecanoyl-sn-glycero-3-phosphocholine. It catalyses the reaction (24S)-hydroxycholesterol + 1-hexadecanoyl-2-(9Z,12Z-octadecadienoyl)-sn-glycero-3-phosphocholine = (24S)-hydroxycholesterol 3-linoleoate + 1-hexadecanoyl-sn-glycero-3-phosphocholine. It carries out the reaction 1-hexadecanoyl-2-(8Z,11Z,14Z-eicosatrienoyl)-sn-glycero-3-phosphocholine + cholesterol = cholesteryl (8Z,11Z,14Z)-eicosatrienoate + 1-hexadecanoyl-sn-glycero-3-phosphocholine. The catalysed reaction is 1-hexadecanoyl-2-(5Z,8Z,11Z-eicosatrienoyl)-sn-glycero-3-phosphocholine + cholesterol = cholesteryl (5Z,8Z,11Z)-eicosatrienoate + 1-hexadecanoyl-sn-glycero-3-phosphocholine. The enzyme catalyses 1-hexadecanoyl-2-(5Z,8Z,11Z,14Z,17Z-eicosapentaenoyl)-sn-glycero-3-phosphocholine + cholesterol = (5Z,8Z,11Z,14Z,17Z-eicosapentaenoyl)-cholesterol + 1-hexadecanoyl-sn-glycero-3-phosphocholine. It catalyses the reaction 1-hexadecanoyl-2-(9Z,12Z-octadecadienoyl)-sn-glycero-3-phosphocholine + cholesterol = cholesteryl (9Z,12Z)-octadecadienoate + 1-hexadecanoyl-sn-glycero-3-phosphocholine. It carries out the reaction 1-hexadecanoyl-2-(6Z,9Z,12Z-octadecatrienoyl)-sn-glycero-3-phosphocholine + cholesterol = (6Z,9Z,12Z-octadecatrienoyl)-cholesterol + 1-hexadecanoyl-sn-glycero-3-phosphocholine. The catalysed reaction is 1-hexadecanoyl-2-(11Z,14Z,17Z-eicosatrienoyl)-sn-glycero-3-phosphocholine + cholesterol = (11Z,14Z,17Z-eicosatrienoyl)-cholesterol + 1-hexadecanoyl-sn-glycero-3-phosphocholine. The enzyme catalyses 1-hexadecanoyl-2-(9Z,12Z,15Z-octadecatrienoyl)-sn-glycero-3-phosphocholine + cholesterol = (9Z,12Z,15Z-octadecatrienoyl)-cholesterol + 1-hexadecanoyl-sn-glycero-3-phosphocholine. It catalyses the reaction a 1-O-alkyl-2-acetyl-sn-glycero-3-phosphocholine + 1-hexadecanoyl-sn-glycero-3-phosphocholine = 1-hexadecanoyl-2-acetyl-sn-glycero-3-phosphocholine + a 1-O-alkyl-sn-glycero-3-phosphocholine. Its function is as follows. Central enzyme in the extracellular metabolism of plasma lipoproteins. Synthesized mainly in the liver and secreted into plasma where it converts cholesterol and phosphatidylcholines (lecithins) to cholesteryl esters and lysophosphatidylcholines on the surface of high and low density lipoproteins (HDLs and LDLs). The cholesterol ester is then transported back to the liver. Also produced in the brain by primary astrocytes, and esterifies free cholesterol on nascent APOE-containing lipoproteins secreted from glia and influences cerebral spinal fluid (CSF) APOE- and APOA1 levels. Together with APOE and the cholesterol transporter ABCA1, plays a key role in the maturation of glial-derived, nascent lipoproteins. Required for remodeling high-density lipoprotein particles into their spherical forms. Has a preference for plasma 16:0-18:2 or 18:O-18:2 phosphatidylcholines. Catalyzes the hydrolysis of 1-O-alkyl-2-acetyl-sn-glycero-3-phosphocholine (platelet-activating factor or PAF) to 1-O-alkyl-sn-glycero-3-phosphocholine (lyso-PAF). Also catalyzes the transfer of the acetate group from PAF to 1-hexadecanoyl-sn-glycero-3-phosphocholine forming lyso-PAF. Catalyzes the esterification of (24S)-hydroxycholesterol (24(S)OH-C), also known as cerebrosterol to produce 24(S)OH-C monoesters. This is Phosphatidylcholine-sterol acyltransferase (Lcat) from Rattus norvegicus (Rat).